The primary structure comprises 366 residues: MKMKLAVLPGDGIGPEVMDAAIRVLKTVLDNDGHEAVFENALIGGAAIDEAGTPLPEETLDICRRSDAILLGAVGGPKWDHNPASLRPEKGLLGLRKEMGLFANLRPVKAYATLLNASPLKRERVENVDLVIVRELTGGLYFGRPSERRGPGENEVVDTLAYTREEIERIIEKAFQLAQIRRKKLASVDKANVLESSRMWREIAEETAKKYPDVELSHMLVDSTSMQLIANPGQFDVIVTENMFGDILSDEASVITGSLGMLPSASLRSDRFGMYEPVHGSAPDIAGQGKANPLGTVLSAALMLRYSFGLEKEAAAIEKAVDDVLQDGYCTGDLQVANGKVVSTIELTDRLIEKLNNSAARPRIFQ.

76-89 (GPKWDHNPASLRPE) serves as a coordination point for NAD(+). Positions 96, 106, 134, and 222 each coordinate substrate. 3 residues coordinate Mg(2+): aspartate 222, aspartate 246, and aspartate 250. NAD(+) is bound at residue 280–292 (GSAPDIAGQGKAN).

Belongs to the isocitrate and isopropylmalate dehydrogenases family. LeuB type 1 subfamily. In terms of assembly, homodimer. Mg(2+) serves as cofactor. Requires Mn(2+) as cofactor.

Its subcellular location is the cytoplasm. It carries out the reaction (2R,3S)-3-isopropylmalate + NAD(+) = 4-methyl-2-oxopentanoate + CO2 + NADH. It participates in amino-acid biosynthesis; L-leucine biosynthesis; L-leucine from 3-methyl-2-oxobutanoate: step 3/4. Its function is as follows. Catalyzes the oxidation of 3-carboxy-2-hydroxy-4-methylpentanoate (3-isopropylmalate) to 3-carboxy-4-methyl-2-oxopentanoate. The product decarboxylates to 4-methyl-2 oxopentanoate. The chain is 3-isopropylmalate dehydrogenase (leuB) from Heyndrickxia coagulans (Weizmannia coagulans).